We begin with the raw amino-acid sequence, 734 residues long: Cytoplasmic polyadenylation element-binding protein 3 (734 aa).

3 disordered regions span residues 1 to 31 (MDRN…RNVP), 98 to 185 (GSKK…AARN), and 220 to 283 (RGSL…LPPR). Basic and acidic residues predominate over residues 16–26 (PAEHPGDEKSG). Low complexity-rich tracts occupy residues 121–140 (SRRT…SPSR) and 232–242 (KSFSSTTTSSS). Positions 243–256 (PEKEREKEKEKIEQ) are enriched in basic and acidic residues. A compositionally biased stretch (polar residues) spans 259 to 275 (YGTTQRQSVNSQQSSAS). Residues 294–316 (IFVGGVPWDITEAALKDSFGEFG) form the RRM domain. 2 disordered regions span residues 564-593 (KAYQ…SNNS) and 630-657 (TVYD…SNSN). Over residues 576–593 (LSSNSPSKARDGQNSNNS) the composition is skewed to low complexity.

Its function is as follows. Cytoplasmic polyadenylation element binding protein that binds to and regulates the translation of specific mRNAs. This chain is Cytoplasmic polyadenylation element-binding protein 3 (cpb-3), found in Caenorhabditis japonica.